The primary structure comprises 187 residues: Protein canopy-1 (187 aa).

The N-terminal stretch at 1 to 24 (MSPWIKHICLVLVAAFMLVKTTES) is a signal peptide. The 154-residue stretch at 28–181 (EALYCSACMA…EVSDHCKSSV (154 aa)) folds into the Saposin B-type domain. 3 disulfide bridges follow: cysteine 32–cysteine 177, cysteine 35–cysteine 170, and cysteine 90–cysteine 143. The short motif at 184–187 (HSEL) is the Prevents secretion from ER element.

It belongs to the canopy family. In terms of assembly, homodimer. Interacts with fgfr1.

It is found in the endoplasmic reticulum. Involved in the maintenance of the midbrain-hindbrain boundary (MHB) organizer. Contributes to a positive-feedback loop of FGF signaling in the MHB, enabling the MHB to exert its role as an organizer for the tectal and cerebellar development. In Danio rerio (Zebrafish), this protein is Protein canopy-1 (cnpy1).